An 84-amino-acid chain; its full sequence is Gomesin-like peptide (84 aa).

An N-terminal signal peptide occupies residues 1–23 (MNRTRALVCLFLAVLILAHESEA). Position 24 is a pyrrolidone carboxylic acid (Q24). 2 disulfides stabilise this stretch: C25–C38 and C29–C34. R41 carries the post-translational modification Arginine amide. A propeptide spanning residues 42-84 (GKRSVEEPSGGAQVVEKRAVDDADIPSAVEERELDEEESIEFR) is cleaved from the precursor.

As to expression, expressed by the venom gland.

The protein localises to the secreted. Its function is as follows. Antibacterial peptide. The polypeptide is Gomesin-like peptide (Hadronyche infensa (Fraser island funnel-web spider)).